Reading from the N-terminus, the 706-residue chain is Polyribonucleotide nucleotidyltransferase (706 aa).

The Mg(2+) site is built by D486 and D492. The region spanning 553–612 (PRIHTIKISTDKIKDVIGKGGSVIRALTEETGTTIEIEDDGTVKIASTDGEKAKHAIRRI) is the KH domain. The 69-residue stretch at 622 to 690 (GRVYQGKVTR…RQGRVRLSIK (69 aa)) folds into the S1 motif domain.

This sequence belongs to the polyribonucleotide nucleotidyltransferase family. In terms of assembly, component of the RNA degradosome, which is a multiprotein complex involved in RNA processing and mRNA degradation. Requires Mg(2+) as cofactor.

Its subcellular location is the cytoplasm. The enzyme catalyses RNA(n+1) + phosphate = RNA(n) + a ribonucleoside 5'-diphosphate. Its function is as follows. Involved in mRNA degradation. Catalyzes the phosphorolysis of single-stranded polyribonucleotides processively in the 3'- to 5'-direction. The polypeptide is Polyribonucleotide nucleotidyltransferase (Pectobacterium carotovorum subsp. carotovorum (strain PC1)).